Consider the following 527-residue polypeptide: MKDKVKAEISKVLEREFVLEKPKDKNLAHYATPLFSLAKELRKSPAMIASEFADKFSDSKIVEASAVNGYLNFKLKSEFLDEISKQILLDSENFAKEDAKKDSYLIEYISANPTGPLHIGHVRGAVYGDTLARLGKRLGYAISTEYYINDAGNQIDLLGTSISLAAKEQLFNESVVYPEKYYRGDYILDIAKLANEKFGKEIFYDESRNLELAEFGKDIVLEIIKKDLADVGIFIESWASEKALYDGLEPTINKLKRSNQMYEKEGATYIASTTLGDDNDRVVVRNDGRPTYLAGDIIYHNAKFEKNFDHYINIWGADHHGYIARLKAAINFLGYDENRLEVILMQMVSLLKEGKPYKMSKRAGNAVLMSDIASEIGAEALRFIFISKANTSSLEFDVDELKKEDSSNPIFYINYAHARINQIFAKAGKSVSDVINADFECLDENSKNLLFEALILPEILEDAFASRQLQKIPDYLKSLAASFHKFYNENRVVGNENEDSLLKVFAVVAVSIKTAFNIMGITAKDRM.

Residues 111–121 (ANPTGPLHIGH) carry the 'HIGH' region motif.

It belongs to the class-I aminoacyl-tRNA synthetase family. In terms of assembly, monomer.

The protein resides in the cytoplasm. The enzyme catalyses tRNA(Arg) + L-arginine + ATP = L-arginyl-tRNA(Arg) + AMP + diphosphate. In Campylobacter concisus (strain 13826), this protein is Arginine--tRNA ligase.